The sequence spans 217 residues: Ras-related protein RIC2 (217 aa).

GTP contacts are provided by residues 21–28 (GDSGVGKS), 69–73 (DTAGQ), and 127–130 (NKSD). 2 S-geranylgeranyl cysteine lipidation sites follow: Cys214 and Cys215.

This sequence belongs to the small GTPase superfamily. Rab family.

It localises to the cell membrane. Its function is as follows. Possesses GTPase activity. The protein is Ras-related protein RIC2 (RIC2) of Oryza sativa subsp. japonica (Rice).